Reading from the N-terminus, the 341-residue chain is Spindolin (341 aa).

The N-terminal stretch at 1-20 (MNKLILISLIASLYQVEVDA) is a signal peptide.

As to quaternary structure, homodimer; disulfide-linked.

In terms of biological role, this protein is a spindle body protein. The polypeptide is Spindolin (SPH) (Choristoneura biennis entomopoxvirus (CbEPV)).